Here is an 85-residue protein sequence, read N- to C-terminus: Anti-neuroexcitation peptide 3 (85 aa).

The first 21 residues, 1 to 21 (MKLSLLLVISASMLIDGLVNA), serve as a signal peptide directing secretion. One can recognise an LCN-type CS-alpha/beta domain in the interval 22–82 (DGYIRGSNGC…TWKSESNTCG (61 aa)). 4 cysteine pairs are disulfide-bonded: Cys-31-Cys-81, Cys-35-Cys-56, Cys-42-Cys-63, and Cys-46-Cys-65.

Belongs to the long (4 C-C) scorpion toxin superfamily. Sodium channel inhibitor family. Beta subfamily. Expressed by the venom gland.

The protein localises to the secreted. In terms of biological role, binds to sodium channels (Nav) and inhibits them. Recombinant ANEP delays the convulsion seizure of model animals by 18% and shows anti-neuroexcitatory activity. This Olivierus martensii (Manchurian scorpion) protein is Anti-neuroexcitation peptide 3.